Consider the following 314-residue polypeptide: Olfactory receptor 5F1 (314 aa).

The Extracellular segment spans residues Met1–Ile25. Residue Asn5 is glycosylated (N-linked (GlcNAc...) asparagine). A helical membrane pass occupies residues Ile26 to Ile46. Topologically, residues Leu47–Gln54 are cytoplasmic. The helical transmembrane segment at Leu55–Thr75 threads the bilayer. At Thr76–Leu99 the chain is on the extracellular side. Cys97 and Cys189 are disulfide-bonded. Residues Gln100 to Tyr120 form a helical membrane-spanning segment. At Asp121–Thr139 the chain is on the cytoplasmic side. Residues Val140–Thr160 form a helical membrane-spanning segment. Topologically, residues Ser161–Glu196 are extracellular. Residues Ser197–Ser217 form a helical membrane-spanning segment. Residues Tyr218–Ala237 lie on the Cytoplasmic side of the membrane. The chain crosses the membrane as a helical span at residues Phe238–Thr258. At Tyr259–Asp271 the chain is on the extracellular side. A helical transmembrane segment spans residues Lys272–Leu292. Residues Arg293–Leu314 are Cytoplasmic-facing.

The protein belongs to the G-protein coupled receptor 1 family.

The protein resides in the cell membrane. In terms of biological role, odorant receptor. This is Olfactory receptor 5F1 (OR5F1) from Homo sapiens (Human).